The sequence spans 440 residues: Xylose isomerase (440 aa).

Active-site residues include histidine 101 and aspartate 104. Residues glutamate 232, glutamate 268, histidine 271, aspartate 296, aspartate 307, aspartate 309, and aspartate 339 each contribute to the Mg(2+) site.

The protein belongs to the xylose isomerase family. As to quaternary structure, homotetramer. Mg(2+) serves as cofactor.

Its subcellular location is the cytoplasm. The enzyme catalyses alpha-D-xylose = alpha-D-xylulofuranose. The sequence is that of Xylose isomerase from Salmonella paratyphi B (strain ATCC BAA-1250 / SPB7).